A 431-amino-acid polypeptide reads, in one-letter code: Glutamate-1-semialdehyde 2,1-aminomutase (431 aa).

Position 265 is an N6-(pyridoxal phosphate)lysine (K265).

This sequence belongs to the class-III pyridoxal-phosphate-dependent aminotransferase family. HemL subfamily. As to quaternary structure, homodimer. It depends on pyridoxal 5'-phosphate as a cofactor.

The protein resides in the cytoplasm. It catalyses the reaction (S)-4-amino-5-oxopentanoate = 5-aminolevulinate. It participates in porphyrin-containing compound metabolism; protoporphyrin-IX biosynthesis; 5-aminolevulinate from L-glutamyl-tRNA(Glu): step 2/2. This Vibrio vulnificus (strain CMCP6) protein is Glutamate-1-semialdehyde 2,1-aminomutase.